A 277-amino-acid polypeptide reads, in one-letter code: Undecaprenyl-diphosphatase (277 aa).

Transmembrane regions (helical) follow at residues 88 to 108, 117 to 137, 157 to 179, 191 to 211, 227 to 247, and 255 to 275; these read MGWL…LFQD, MWIV…ADAV, FAQA…AGLL, SFLL…YKTV, LATV…LKFV, and FVWY…FNVI.

This sequence belongs to the UppP family.

The protein localises to the cell membrane. It carries out the reaction di-trans,octa-cis-undecaprenyl diphosphate + H2O = di-trans,octa-cis-undecaprenyl phosphate + phosphate + H(+). Catalyzes the dephosphorylation of undecaprenyl diphosphate (UPP). Confers resistance to bacitracin. The sequence is that of Undecaprenyl-diphosphatase from Paenarthrobacter aurescens (strain TC1).